Here is a 1732-residue protein sequence, read N- to C-terminus: Transient receptor potential cation channel subfamily M member 3 (1732 aa).

The Cytoplasmic portion of the chain corresponds to 1 to 894 (MPGPWGTVYF…RKIYEFYNAP (894 aa)). Calmodulin-binding regions lie at residues 41–64 (WTIR…QKSW), 192–215 (NFEL…MTTG), 300–323 (TGKY…QKIN), 601–624 (RKRF…KLLG), and 793–816 (RKNS…LEFK). A required for the inhibitory action of G-beta/gamma-subunits of heterotrimeric G-proteins region spans residues 617–625 (PKALKLLGM). Position 796 (Ser-796) interacts with 1,2-dioctanoyl-sn-glycero-3-phospho-(1D-myo-inositol-4,5-bisphosphate). Residues 829–851 (EIHLQEKEPEEPEKPTKEKDEED) form a disordered region. A compositionally biased stretch (basic and acidic residues) spans 831–847 (HLQEKEPEEPEKPTKEK). The helical transmembrane segment at 895-918 (IVKFWFYTLAYIGYLMLFNYIVLV) threads the bilayer. Residues 919-925 (KMERWPS) are Extracellular-facing. The helical transmembrane segment at 926 to 948 (TQEWIVISYIFTLGIEKMREILM) threads the bilayer. Residues 949–964 (SEPGKLLQKVKVWLQE) are Cytoplasmic-facing. Residues 965 to 985 (YWNVTDLIAILLFSVGMILRL) traverse the membrane as a helical segment. Residues 986-989 (QDQP) lie on the Extracellular side of the membrane. A helical transmembrane segment spans residues 990–1013 (FRSDGRVIYCVNIIYWYIRLLDIF). Residues 1014 to 1028 (GVNKYLGPYVMMIGK) lie on the Cytoplasmic side of the membrane. Lys-1017 and Tyr-1018 together coordinate 1,2-dioctanoyl-sn-glycero-3-phospho-(1D-myo-inositol-4,5-bisphosphate). The helical transmembrane segment at 1029–1056 (MMIDMMYFVIIMLVVLMSFGVARQAILF) threads the bilayer. The Extracellular segment spans residues 1057-1073 (PNEEPSWKLAKNIFYMP). The pore-forming intramembrane region spans 1074–1101 (YWMIYGEVFADQIDPPCGQNETREDGKT). The Extracellular portion of the chain corresponds to 1102 to 1111 (IQLPPCKTGA). A helical membrane pass occupies residues 1112–1137 (WIVPAIMACYLLVANILLVNLLIAVF). Residues 1138–1732 (NNTFFEVKSI…AFHSFESKHN (595 aa)) lie on the Cytoplasmic side of the membrane. The tract at residues 1610 to 1732 (EREAELSHPS…AFHSFESKHN (123 aa)) is disordered. Polar residues-rich tracts occupy residues 1635–1653 (PISS…NNIT) and 1690–1701 (NTASLRNPFQRS).

This sequence belongs to the transient receptor (TC 1.A.4) family. LTrpC subfamily. TRPM3 sub-subfamily. Homotetramer. Interacts with TRPM1; the interaction results in the formation of a heteromultimeric cation channel complex that are functionally different from the homomeric channels.

It localises to the cell membrane. It catalyses the reaction Ca(2+)(in) = Ca(2+)(out). It carries out the reaction Mn(2+)(in) = Mn(2+)(out). The catalysed reaction is Zn(2+)(in) = Zn(2+)(out). The enzyme catalyses Mg(2+)(in) = Mg(2+)(out). It catalyses the reaction Na(+)(in) = Na(+)(out). Activated by the neurosteroid pregnelonone sulfate (PregS). PregS activates the channel by shifting its current-voltage activation curve toward more negative membrane potentials and also potentiates temperature-induced activation. Activated by heat. Intracellular Ca(2+) inhibits TRPM3 probably via interaction with Ca(2+)/calmodulin. Intracellular Mg(2+) inhibits TRPM3 activity. Both intracellular and extracellular protons block TRPM3 through propable binding sites in the pore region. Positively regulated by phosphoinositide phosphoinositol 4,5-biphosphate (PI(4,5)P2). Strongly inhibited by activation of G(i)-coupled receptors via direct binding with G-beta/gamma-subunits of heterotrimeric G-proteins. With respect to regulation, insensitive to pregnenolone sulfate (PregS) or heat. Its activity is regulated as follows. Not inhibited by G-beta/gamma-subunits of heterotrimeric G-proteins. Functionally, constitutively active, non-selective divalent cation-conducting channel that is permeable to Ca(2+), Mn(2+), and Mg(2+), with a high permeability for Ca(2+). However, can be enhanced by increasing temperature and by ligands, including the endogenous neurosteroid pregnenolone sulfate and sphingosine-1 and suppressed by intracellular Mg(2+). Implicated in a variety of cellular processes, including insulin/peptide secretion, vascular constriction and dilation, noxious heat sensing, inflammatory and spontaneous pain sensitivity. In neurons of the dorsal root ganglia, functions as thermosensitive channel for the detection of noxious heat and spontaneous pain. Suggested to function as an ionotropic steroid receptor in beta-cell, indeed pregnenolone sulfate leads to Ca(2+) influx and enhanced insulin secretion. Mediates Zn(2+) uptake into the lumen of pancreatic beta cell secretory granules, thereby regulating insulin secretion. Forms heteromultimeric ion channels with TRPM1 which are permeable for Ca(2+) and Zn(2+) ions. Exists as multiple splice variants which differ significantly in their biophysical properties. Displays strongly reduced permeability for divalent cations and high selectivity toward monovalent cations. Its function is as follows. No channel activity. This is Transient receptor potential cation channel subfamily M member 3 from Mus musculus (Mouse).